The primary structure comprises 255 residues: tRNA (guanine-N(1)-)-methyltransferase (255 aa).

S-adenosyl-L-methionine-binding positions include G113 and 133 to 138 (IGDYVL).

Belongs to the RNA methyltransferase TrmD family. As to quaternary structure, homodimer.

The protein localises to the cytoplasm. It carries out the reaction guanosine(37) in tRNA + S-adenosyl-L-methionine = N(1)-methylguanosine(37) in tRNA + S-adenosyl-L-homocysteine + H(+). In terms of biological role, specifically methylates guanosine-37 in various tRNAs. In Salmonella paratyphi A (strain ATCC 9150 / SARB42), this protein is tRNA (guanine-N(1)-)-methyltransferase.